Here is a 478-residue protein sequence, read N- to C-terminus: MTTALSEQQTGLSGRVARVIGPVVDVEFPRGELPALFNALTVDVDLEAVAKTITLEVAQHLGDNIVRAVSMAPTDGLIRGAEVKDTGKPISVPVGDTVKGHVFNALGDCLDEPGLGRDGEQWSIHRKPPAFDQLEGKTEILETGIKVIDLLTPYVKGGKIGLFGGAGVGKTVLIQEMITRIAREFSGTSVFAGVGERTREGTDLFLEMEEMGVLQDTALVFGQMDEPPGVRMRVALSGLTMAEYFRDVQHQDVLLFIDNIFRFSQAGSEVSTLLGRMPSAVGYQPTLADEMGELQERITSTKGRSITSLQAVYVPADDYTDPAPATVFAHLDATTELDRSIASKGIYPAVNPLTSTSRILEPGIVGEEHYQVAQRVINILQKNKELQDIIAILGMDELSEEDKITVQRARRIERFLGQNFFVAEKFTGLPGSYVPLKDTIDAFRRICDGEYDAYPERCFNGLGGLDDVEAEYKKLQEK.

164–171 contributes to the ATP binding site; that stretch reads GGAGVGKT.

It belongs to the ATPase alpha/beta chains family. As to quaternary structure, F-type ATPases have 2 components, CF(1) - the catalytic core - and CF(0) - the membrane proton channel. CF(1) has five subunits: alpha(3), beta(3), gamma(1), delta(1), epsilon(1). CF(0) has three main subunits: a(1), b(2) and c(9-12). The alpha and beta chains form an alternating ring which encloses part of the gamma chain. CF(1) is attached to CF(0) by a central stalk formed by the gamma and epsilon chains, while a peripheral stalk is formed by the delta and b chains.

Its subcellular location is the cell membrane. The enzyme catalyses ATP + H2O + 4 H(+)(in) = ADP + phosphate + 5 H(+)(out). In terms of biological role, produces ATP from ADP in the presence of a proton gradient across the membrane. The catalytic sites are hosted primarily by the beta subunits. The sequence is that of ATP synthase subunit beta from Corynebacterium kroppenstedtii (strain DSM 44385 / JCM 11950 / CIP 105744 / CCUG 35717).